Reading from the N-terminus, the 160-residue chain is 6,7-dimethyl-8-ribityllumazine synthase (160 aa).

Residues Trp26, Ala58 to Glu60, and Val80 to Ile82 contribute to the 5-amino-6-(D-ribitylamino)uracil site. (2S)-2-hydroxy-3-oxobutyl phosphate is bound at residue Glu85 to Thr86. The active-site Proton donor is His88. 5-amino-6-(D-ribitylamino)uracil is bound at residue Asn113. Residue Arg127 participates in (2S)-2-hydroxy-3-oxobutyl phosphate binding.

The protein belongs to the DMRL synthase family. As to quaternary structure, homopentamer.

It catalyses the reaction (2S)-2-hydroxy-3-oxobutyl phosphate + 5-amino-6-(D-ribitylamino)uracil = 6,7-dimethyl-8-(1-D-ribityl)lumazine + phosphate + 2 H2O + H(+). Its pathway is cofactor biosynthesis; riboflavin biosynthesis; riboflavin from 2-hydroxy-3-oxobutyl phosphate and 5-amino-6-(D-ribitylamino)uracil: step 1/2. In terms of biological role, catalyzes the formation of 6,7-dimethyl-8-ribityllumazine by condensation of 5-amino-6-(D-ribitylamino)uracil with 3,4-dihydroxy-2-butanone 4-phosphate. This is the penultimate step in the biosynthesis of riboflavin. This chain is 6,7-dimethyl-8-ribityllumazine synthase, found in Mycobacteroides abscessus (strain ATCC 19977 / DSM 44196 / CCUG 20993 / CIP 104536 / JCM 13569 / NCTC 13031 / TMC 1543 / L948) (Mycobacterium abscessus).